Consider the following 421-residue polypeptide: Uracil permease (421 aa).

Helical transmembrane passes span 18 to 38, 41 to 61, 65 to 85, 89 to 109, 115 to 135, 160 to 180, 186 to 206, 232 to 252, 304 to 324, 329 to 349, 371 to 391, and 393 to 413; these read IPLS…VPML, INPA…IFLC, IPAY…VIST, EAAL…GLLV, GWIE…VIGL, PKVI…NVMF, IIPI…LGIV, IAII…HLIV, VYSI…SFVG, LIQT…FGVI, ILTA…WGNF, and MKGM…FNII.

The protein belongs to the nucleobase:cation symporter-2 (NCS2) (TC 2.A.40) family.

The protein localises to the cell membrane. Inhibited by the proton gradient disruptor carbonyl cyanide m-chlorophenylhydrazone (CCCP), but not by the sodium gradient disruptor ouabain. Both xanthine and uric acid act as competitive inhibitors of uracil transport. Specific for the uptake of uracil. Transport is probably proton-dependent. This chain is Uracil permease, found in Paenibacillus larvae subsp. larvae (strain NRRL B-3650 / LMG 16245).